The sequence spans 157 residues: Mannose-specific lectin (157 aa).

The or 23; in 70% of the molecules signal peptide spans 1–19; the sequence is MAKASLLILAAIFLGVITP. Positions 24–132 constitute a Bulb-type lectin domain; the sequence is DNILYSGETL…DRWATGTHTG (109 aa). 22 residues coordinate alpha-D-mannopyranose: glutamine 49, aspartate 51, asparagine 53, tyrosine 57, aspartate 60, lysine 61, tryptophan 64, alanine 65, asparagine 67, glutamine 80, aspartate 82, asparagine 84, tyrosine 88, isoleucine 95, tryptophan 96, asparagine 99, asparagine 106, glutamine 112, aspartate 114, asparagine 116, tyrosine 120, and tryptophan 125. Cysteines 52 and 75 form a disulfide. A propeptide spans 129-157 (removed in mature form); sequence THTGLVGIPASPPSEKYPTAGKIKLVTAK.

In terms of assembly, homotetramer.

It localises to the secreted. Its function is as follows. Mannose-specific lectin which binds alpha-D-linked mannose. Displays a high affinity for alpha-(1-3)-mannose oligomers. Displays antiviral activity and therefore may contribute to defense against infections. This Galanthus nivalis (Common snowdrop) protein is Mannose-specific lectin.